The chain runs to 429 residues: Probable M18 family aminopeptidase 2 (429 aa).

Residues histidine 82, histidine 156, and histidine 401 each contribute to the Zn(2+) site.

The protein belongs to the peptidase M18 family. The cofactor is Zn(2+).

In Pseudomonas entomophila (strain L48), this protein is Probable M18 family aminopeptidase 2.